Consider the following 92-residue polypeptide: Cytochrome c2 (92 aa).

Cys-12, Cys-15, His-16, and Met-66 together coordinate heme c.

It belongs to the cytochrome c family. Binds 1 heme c group covalently per subunit.

Its function is as follows. Cytochrome c2 is found mainly in purple, non-sulfur, photosynthetic bacteria where it functions as the electron donor to the oxidized bacteriochlorophyll in the photophosphorylation pathway. However, it may also have a role in the respiratory chain and is found in some non-photosynthetic bacteria. This chain is Cytochrome c2, found in Rhodocyclus tenuis (Rhodospirillum tenue).